Here is a 245-residue protein sequence, read N- to C-terminus: Acetylglutamate kinase (245 aa).

Residues G41–G42, R63, and N156 each bind substrate.

The protein belongs to the acetylglutamate kinase family. ArgB subfamily.

The protein localises to the cytoplasm. It carries out the reaction N-acetyl-L-glutamate + ATP = N-acetyl-L-glutamyl 5-phosphate + ADP. It functions in the pathway amino-acid biosynthesis; L-arginine biosynthesis; N(2)-acetyl-L-ornithine from L-glutamate: step 2/4. Functionally, catalyzes the ATP-dependent phosphorylation of N-acetyl-L-glutamate. The protein is Acetylglutamate kinase of Leuconostoc citreum (strain KM20).